Reading from the N-terminus, the 375-residue chain is PqqA peptide cyclase (375 aa).

In terms of domain architecture, Radical SAM core spans 18-235 (ILPPMAMLAE…EAREKYQGIL (218 aa)). Positions 32, 36, and 39 each coordinate [4Fe-4S] cluster.

This sequence belongs to the radical SAM superfamily. PqqE family. In terms of assembly, interacts with PqqD. The interaction is necessary for activity of PqqE. [4Fe-4S] cluster serves as cofactor.

The enzyme catalyses [PQQ precursor protein] + S-adenosyl-L-methionine = E-Y cross-linked-[PQQ precursor protein] + 5'-deoxyadenosine + L-methionine + H(+). It functions in the pathway cofactor biosynthesis; pyrroloquinoline quinone biosynthesis. Its function is as follows. Catalyzes the cross-linking of a glutamate residue and a tyrosine residue in the PqqA protein as part of the biosynthesis of pyrroloquinoline quinone (PQQ). This is PqqA peptide cyclase from Rhizobium meliloti (strain 1021) (Ensifer meliloti).